Consider the following 181-residue polypeptide: Probable pyruvoyl-dependent arginine decarboxylase (181 aa).

Position 43 is a pyruvic acid (Ser) (S43).

The protein belongs to the PdaD family. Pyruvate is required as a cofactor.

It carries out the reaction L-arginine + H(+) = agmatine + CO2. The polypeptide is Probable pyruvoyl-dependent arginine decarboxylase (Chlorobium luteolum (strain DSM 273 / BCRC 81028 / 2530) (Pelodictyon luteolum)).